Here is a 476-residue protein sequence, read N- to C-terminus: Argininosuccinate lyase (476 aa).

The protein belongs to the lyase 1 family. Argininosuccinate lyase subfamily.

It localises to the cytoplasm. It catalyses the reaction 2-(N(omega)-L-arginino)succinate = fumarate + L-arginine. It participates in amino-acid biosynthesis; L-arginine biosynthesis; L-arginine from L-ornithine and carbamoyl phosphate: step 3/3. This Thermobifida fusca (strain YX) protein is Argininosuccinate lyase.